We begin with the raw amino-acid sequence, 117 residues long: Minor capsid protein p17 (117 aa).

Asn-12 carries an N-linked (GlcNAc...) asparagine; by host glycan. Residues Ala-39–Tyr-59 form a helical membrane-spanning segment. Residues Asn-61 and Asn-97 are each glycosylated (N-linked (GlcNAc...) asparagine; by host).

This sequence belongs to the asfivirus minor capsid protein p17 family. In terms of assembly, interacts with the minor capsid protein M1249L and with the hexon capsid protein p72 capsomers; these interactions form a rigid zipper structure that stabilizes the capsomers. Interacts with host STING1.

Its subcellular location is the virion membrane. The protein localises to the host endoplasmic reticulum membrane. Its function is as follows. Together with the penton and the other minor capsid proteins (M1249L, p49), forms a complicated network immediately below the outer capsid shell, stabilizing the whole capsid. Three copies of p17 encircle each p72 capsomer in the inner capsid shell, anchoring p72 capsomers on the inner membrane. Required for the assembly of the capsid and icosahedral morphogenesis. Additionally, inhibits the host cGAS-STING pathway through its interaction with STING1 and subsequent interference of the recruitment of downstream components TBK1 and IKBKE. This chain is Minor capsid protein p17, found in Ornithodoros (relapsing fever ticks).